A 264-amino-acid chain; its full sequence is Thymidylate synthase 2 (264 aa).

Arg-21 serves as a coordination point for dUMP. His-51 contributes to the (6R)-5,10-methylene-5,6,7,8-tetrahydrofolate binding site. 126-127 (RR) is a dUMP binding site. Residue Cys-146 is the Nucleophile of the active site. DUMP is bound by residues 166–169 (RSAD), Asn-177, and 207–209 (HIY). Asp-169 is a binding site for (6R)-5,10-methylene-5,6,7,8-tetrahydrofolate. Ser-263 lines the (6R)-5,10-methylene-5,6,7,8-tetrahydrofolate pocket.

Belongs to the thymidylate synthase family. Bacterial-type ThyA subfamily. As to quaternary structure, homodimer.

The protein localises to the cytoplasm. The catalysed reaction is dUMP + (6R)-5,10-methylene-5,6,7,8-tetrahydrofolate = 7,8-dihydrofolate + dTMP. It functions in the pathway pyrimidine metabolism; dTTP biosynthesis. Functionally, catalyzes the reductive methylation of 2'-deoxyuridine-5'-monophosphate (dUMP) to 2'-deoxythymidine-5'-monophosphate (dTMP) while utilizing 5,10-methylenetetrahydrofolate (mTHF) as the methyl donor and reductant in the reaction, yielding dihydrofolate (DHF) as a by-product. This enzymatic reaction provides an intracellular de novo source of dTMP, an essential precursor for DNA biosynthesis. This Bacillus amyloliquefaciens (Bacillus velezensis) protein is Thymidylate synthase 2.